Consider the following 247-residue polypeptide: Uridylate kinase (247 aa).

An ATP-binding site is contributed by 15–18; it reads KLSG. The segment at 23–28 is involved in allosteric activation by GTP; it reads GDEGFG. Glycine 57 is a binding site for UMP. Residues glycine 58 and arginine 62 each contribute to the ATP site. UMP-binding positions include aspartate 77 and 138-145; that span reads TGNPFFTT. 3 residues coordinate ATP: threonine 165, tyrosine 171, and aspartate 174.

The protein belongs to the UMP kinase family. As to quaternary structure, homohexamer.

It localises to the cytoplasm. The catalysed reaction is UMP + ATP = UDP + ADP. It participates in pyrimidine metabolism; CTP biosynthesis via de novo pathway; UDP from UMP (UMPK route): step 1/1. With respect to regulation, allosterically activated by GTP. Inhibited by UTP. In terms of biological role, catalyzes the reversible phosphorylation of UMP to UDP. This chain is Uridylate kinase, found in Saccharophagus degradans (strain 2-40 / ATCC 43961 / DSM 17024).